Reading from the N-terminus, the 562-residue chain is Formate--tetrahydrofolate ligase (562 aa).

Position 71 to 78 (71 to 78 (TPAGEGKS)) interacts with ATP.

This sequence belongs to the formate--tetrahydrofolate ligase family.

It catalyses the reaction (6S)-5,6,7,8-tetrahydrofolate + formate + ATP = (6R)-10-formyltetrahydrofolate + ADP + phosphate. Its pathway is one-carbon metabolism; tetrahydrofolate interconversion. The chain is Formate--tetrahydrofolate ligase from Bacillus cereus (strain G9842).